Consider the following 639-residue polypeptide: MESPTHPKPSKDKTFPWNLVFLVGILFQIDMGMANPSPHQVYNVTWVITNVQTNSRANATSMLGTLTDAYPTLYVDLCDLVGDTWEPIAPDPRSWARYSSSTHGCKTTDRKKQQQTYPFYVCPGHAPSMGPKGTYCGGAQDGFCAAWGCETTGEAWWKPTSSWDYITVKRGSNQDNSCKGKCNPLVLQFTQKGRQASWDRPKMWGLRLYRSGYDPIALFSVSRQVMTITPPQAMGPNLVLPDQKPPSRQSQTKSKVTTQRPQITSSTPRSVASATMGPKRIGTGDRLINLVQGTYLALNATDPNKTKDCWLCLVSRPPYYEGIAVLGNYSNQTNPPPSCLSTPQHKLTISEVSGQGLCIGTVPKTHQALCKKTQKGHKGTHYLAAPNGTYWACNTGLTPCISMAVLNWTSDFCVLIELWPRVTYHQPEYIYTHFDKAVRFRREPISLTVALMLGGLTVGGIAAGVGTGTKALLETAQFRQLQIAMHTDIQALEESISALEKSLTSLSEVVLQNRRGLDILFLQEGGLCAALKEECCFYADHTGLVRDNMAKLRERLKQRQQLFDSQQGWFEGWFNKSPWFTTLISSIMGPLLILLLILLLGPCILNRLVQFVKDRISVVQALILTQQYQQIQQYDSDRP.

An N-terminal signal peptide occupies residues 1-34; sequence MESPTHPKPSKDKTFPWNLVFLVGILFQIDMGMA. Residues 35-583 lie on the Extracellular side of the membrane; the sequence is NPSPHQVYNV…FNKSPWFTTL (549 aa). Residues N43 and N58 are each glycosylated (N-linked (GlcNAc...) asparagine; by host). Disulfide bonds link C122–C144 and C136–C149. The tract at residues 232–278 is disordered; the sequence is QAMGPNLVLPDQKPPSRQSQTKSKVTTQRPQITSSTPRSVASATMGP. Positions 246–273 are enriched in polar residues; it reads PSRQSQTKSKVTTQRPQITSSTPRSVAS. Residues N299 and N304 are each glycosylated (N-linked (GlcNAc...) asparagine; by host). 3 cysteine pairs are disulfide-bonded: C309-C312, C309-C536, and C528-C535. The CXXC signature appears at 309-312; the sequence is CWLC. N-linked (GlcNAc...) asparagine; by host glycans are attached at residues N328, N331, N387, and N407. The segment at 445–465 is fusion peptide; the sequence is ISLTVALMLGGLTVGGIAAGV. Coiled-coil stretches lie at residues 473-522 and 532-568; these read LETA…ILFL and KEECCFYADHTGLVRDNMAKLRERLKQRQQLFDSQQG. The tract at residues 511 to 527 is immunosuppression; it reads LQNRRGLDILFLQEGGL. Residues 528–536 carry the CX6CC motif; that stretch reads CAALKEECC. A helical transmembrane segment spans residues 584-604; it reads ISSIMGPLLILLLILLLGPCI. C603 is lipidated: S-palmitoyl cysteine; by host. Topologically, residues 605-639 are cytoplasmic; that stretch reads LNRLVQFVKDRISVVQALILTQQYQQIQQYDSDRP.

As to quaternary structure, the mature envelope protein (Env) consists of a trimer of SU-TM heterodimers attached by a labile interchain disulfide bond. In terms of processing, specific enzymatic cleavages in vivo yield mature proteins. Envelope glycoproteins are synthesized as an inactive precursor that is N-glycosylated and processed likely by host cell furin or by a furin-like protease in the Golgi to yield the mature SU and TM proteins. The cleavage site between SU and TM requires the minimal sequence [KR]-X-[KR]-R. The R-peptide is released from the C-terminus of the cytoplasmic tail of the TM protein upon particle formation as a result of proteolytic cleavage by the viral protease. Cleavage of this peptide is required for TM to become fusogenic. The CXXC motif is highly conserved across a broad range of retroviral envelope proteins. It is thought to participate in the formation of a labile disulfide bond possibly with the CX6CC motif present in the transmembrane protein. Isomerization of the intersubunit disulfide bond to an SU intrachain disulfide bond is thought to occur upon receptor recognition in order to allow membrane fusion. Post-translationally, the transmembrane protein is palmitoylated. In terms of processing, the R-peptide is palmitoylated.

The protein localises to the virion membrane. It localises to the host cell membrane. Functionally, the surface protein (SU) attaches the virus to the host cell by binding to its receptor. This interaction triggers the refolding of the transmembrane protein (TM) and is thought to activate its fusogenic potential by unmasking its fusion peptide. Fusion occurs at the host cell plasma membrane. In terms of biological role, the transmembrane protein (TM) acts as a class I viral fusion protein. Under the current model, the protein has at least 3 conformational states: pre-fusion native state, pre-hairpin intermediate state, and post-fusion hairpin state. During viral and target cell membrane fusion, the coiled coil regions (heptad repeats) assume a trimer-of-hairpins structure, positioning the fusion peptide in close proximity to the C-terminal region of the ectodomain. The formation of this structure appears to drive apposition and subsequent fusion of viral and target cell membranes. Membranes fusion leads to delivery of the nucleocapsid into the cytoplasm. The sequence is that of Envelope glycoprotein (env) from Feline leukemia virus (strain C/Sarma).